Reading from the N-terminus, the 370-residue chain is Putative agmatine deiminase (370 aa).

Catalysis depends on Cys-361, which acts as the Amidino-cysteine intermediate.

The protein belongs to the agmatine deiminase family.

The enzyme catalyses agmatine + H2O = N-carbamoylputrescine + NH4(+). In Shewanella baltica (strain OS185), this protein is Putative agmatine deiminase.